Here is a 540-residue protein sequence, read N- to C-terminus: Chaperonin GroEL (540 aa).

Residues 29 to 32 (TLGP), 86 to 90 (DGTTT), Gly-413, 477 to 479 (DAL), and Asp-493 contribute to the ATP site.

The protein belongs to the chaperonin (HSP60) family. In terms of assembly, forms a cylinder of 14 subunits composed of two heptameric rings stacked back-to-back. Interacts with the co-chaperonin GroES.

It localises to the cytoplasm. The catalysed reaction is ATP + H2O + a folded polypeptide = ADP + phosphate + an unfolded polypeptide.. In terms of biological role, together with its co-chaperonin GroES, plays an essential role in assisting protein folding. The GroEL-GroES system forms a nano-cage that allows encapsulation of the non-native substrate proteins and provides a physical environment optimized to promote and accelerate protein folding. The chain is Chaperonin GroEL from Clostridium botulinum (strain Alaska E43 / Type E3).